Reading from the N-terminus, the 202-residue chain is Helix-loop-helix protein 10 (202 aa).

2 disordered regions span residues 1–26 (MESS…NSEL) and 83–112 (QNKS…GKID). Residues 17–26 (STGNHGNSEL) are compositionally biased toward polar residues. A basic motif region spans residues 121 to 134 (TRRYEANARERNRV). The region spanning 121–172 (TRRYEANARERNRVQQLSKMFDQLRVCLPIEDDAKISKLATLKVASSYIGYL) is the bHLH domain. Residues 135-172 (QQLSKMFDQLRVCLPIEDDAKISKLATLKVASSYIGYL) form a helix-loop-helix motif region.

Heterodimer with hlh-2. As to expression, expressed in intestine, neurons in head, body and tail, and in body hypodermis, and vulva. Expressed in neurons in the male-specific genital sensilla (simple sense organs) known as rays.

The protein localises to the nucleus. The protein resides in the cytoplasm. Its function is as follows. Probable transcription factor which binds the E box motif 5'-CA[TC][AG]TG-3'. The chain is Helix-loop-helix protein 10 from Caenorhabditis elegans.